A 2049-amino-acid chain; its full sequence is Non-reducing polyketide synthase hmp3 (2049 aa).

Positions 9-246 (LYFGDQTDSW…NELSIHALQH (238 aa)) are N-terminal acylcarrier protein transacylase (SAT) domain. Residues 365–793 (PGRIAIVGMA…GGNASLILED (429 aa)) form the Ketosynthase family 3 (KS3) domain. Residues cysteine 538, histidine 673, and histidine 712 each act as for beta-ketoacyl synthase activity in the active site. The segment at 887–1146 (VFVFTGQGSH…VDFVGALGAL (260 aa)) is malonyl-CoA:ACP transacylase (MAT) domain. The For acyl/malonyl transferase activity role is filled by serine 978. An N-terminal hotdog fold region spans residues 1265–1404 (QQIVEESSSP…AQTLQTSWNR (140 aa)). The 309-residue stretch at 1265–1573 (QQIVEESSSP…FHEVSNNVLD (309 aa)) folds into the PKS/mFAS DH domain. Positions 1269-1572 (EESSSPSLHV…SFHEVSNNVL (304 aa)) are product template (PT) domain. The interval 1425-1573 (GHRMLPSILY…FHEVSNNVLD (149 aa)) is C-terminal hotdog fold. Positions 1626–1704 (SSESELFHTI…DLRNEFARSS (79 aa)) constitute a Carrier domain. Serine 1663 bears the O-(pantetheine 4'-phosphoryl)serine mark. The tract at residues 1700–1747 (FARSSTSTPPSKTFSEFSIVDATPESTRSSSRAPSEKKEPAPASEKSE) is disordered. Residues 1703 to 1717 (SSTSTPPSKTFSEFS) show a composition bias toward low complexity. The segment covering 1723–1732 (PESTRSSSRA) has biased composition (polar residues). Residues 1733-1747 (PSEKKEPAPASEKSE) show a composition bias toward basic and acidic residues. The interval 1761–1951 (SPLPSARITL…KRTAIIWAKK (191 aa)) is thioesterase (TE) domain.

It functions in the pathway secondary metabolite biosynthesis. In terms of biological role, non-reducing polyketide synthase; part of the gene cluster that mediates the biosynthesis of hypothemycin, a resorcylic acid lactone (RAL) that irreversibly inhibits a subset of protein kinases with a conserved cysteine in the ATP binding site such as human ERK2. The first step is performed by both PKSs hmp3 and hmp8 and leads to the production of 7',8'-dehydrozearalenol (DHZ). The highly reducing PKS hpm8 synthesizes the reduced hexaketide (7S,11S,2E,8E)-7,11-dihydroxy-dodeca-2,8-dienoate, which is transferred downstream to the non-reducing PKS hpm3. Hpm3 then extends the reduced hexaketide to a nonaketide, after which regioselective cyclization and macrolactonization affords DHZ. The next step is the conversion of DHZ into aigialomycin C and is performed by the O-methyltransferase hmp5, the FAD-binding monooxygenase hmp7, and the cytochrome P450 monooxygenase hmp1. The wide substrate tolerance of the hmp5 and hmp7 implies that the reactions from DHZ to aigialomycin C can occur in any order. The steps from aigialomycin C to hypothemycin are less well established. The FAD-linked oxidoreductase hmp9 presumably catalyzes oxidation of the C-6' hydroxyl to a ketone. The timing of this oxidation is important, since the resulting enone functional group is a Michael acceptor that can react spontaneously with glutathione, an abundant metabolite in fungal cells. The glutathione S-transferase hmp2 catalyzes cis-trans isomerization of the 7',8' double bond with equilibrium favoring the trans isomer. The hpm6-encoded transporter might preferentially pump hypothemycin out of the cell relative to the trans isomer aigialomycin A. The cis-to-trans isomerization may be coupled with C-4' hydroxylation, since all known hypothemycin analogs containing the enone functional group also have hydroxyl groups at both C-4' and C-5'. In Hypomyces subiculosus (Nectria subiculosa), this protein is Non-reducing polyketide synthase hmp3.